The following is a 402-amino-acid chain: Multidrug resistance protein MdtH (402 aa).

11 consecutive transmembrane segments (helical) span residues 13–33 (YFLLVDNMLVVLGFFVVFPLI), 34–54 (SIRFVDQMGWAALMVGIALGL), 99–116 (PWLLWFSCFLSGLGGTLF), 139–159 (LLMMQDSAGAVIGALLGSWLL), 165–185 (LVCATGAALFILCAAFNAWLL), 214–234 (VLTLTGYYMLAVQVMLMLPIM), 243–263 (AAVKWMYAIEACLSLTLLYPI), 277–297 (LMAGLLVMTLSMMPIGLVSSV), 300–320 (LFVLICTFYIGSIIAEPARET), 340–360 (LGLALGGALGYAGGGWLFDSG), and 368–388 (LPWVMLGVVGFITLIALWWQF).

The protein belongs to the major facilitator superfamily. DHA1 family. MdtH (TC 2.A.1.2.21) subfamily.

Its subcellular location is the cell inner membrane. This chain is Multidrug resistance protein MdtH, found in Enterobacter sp. (strain 638).